The following is a 465-amino-acid chain: Pancreatic triacylglycerol lipase (465 aa).

An N-terminal signal peptide occupies residues 1–16 (MLLLWILSLFLETVAG). 2 disulfides stabilise this stretch: Cys20/Cys26 and Cys107/Cys118. The Nucleophile role is filled by Ser169. Asp193 functions as the Charge relay system in the catalytic mechanism. Glu204, Arg207, Asp209, and Asp212 together coordinate Ca(2+). A disulfide bridge connects residues Cys254 and Cys278. The Charge relay system role is filled by His280. Intrachain disulfides connect Cys302-Cys313 and Cys316-Cys321. Asn351, Asn398, and Asn425 each carry an N-linked (GlcNAc...) asparagine glycan. The PLAT domain maps to 355–465 (WRYRIAVTLS…EEVLLTLQPC (111 aa)). Cys449 and Cys465 are joined by a disulfide.

The protein belongs to the AB hydrolase superfamily. Lipase family. As to quaternary structure, forms a 1:1 stoichiometric complex with (pro)colipase/CLPS.

It localises to the secreted. It carries out the reaction a triacylglycerol + H2O = a diacylglycerol + a fatty acid + H(+). The enzyme catalyses 1,2,3-tributanoylglycerol + H2O = dibutanoylglycerol + butanoate + H(+). It catalyses the reaction 1,2,3-tri-(9Z-octadecenoyl)-glycerol + H2O = di-(9Z)-octadecenoylglycerol + (9Z)-octadecenoate + H(+). The catalysed reaction is all-trans-retinyl hexadecanoate + H2O = all-trans-retinol + hexadecanoate + H(+). It carries out the reaction 1,2-di-(9Z-octadecenoyl)-glycerol + H2O = (9Z-octadecenoyl)-glycerol + (9Z)-octadecenoate + H(+). With respect to regulation, inhibited by bile salts, is reactivated by (pro)colipase/CLPS. Functionally, plays an important role in fat metabolism. It preferentially splits the esters of long-chain fatty acids at positions 1 and 3, producing mainly 2-monoacylglycerol and free fatty acids, and shows considerably higher activity against insoluble emulsified substrates than against soluble ones. In Cavia porcellus (Guinea pig), this protein is Pancreatic triacylglycerol lipase (PNLIP).